Reading from the N-terminus, the 387-residue chain is 3-ketoacyl-CoA thiolase (387 aa).

Cys91 acts as the Acyl-thioester intermediate in catalysis. Residues His343 and Cys373 each act as proton acceptor in the active site.

This sequence belongs to the thiolase-like superfamily. Thiolase family. As to quaternary structure, heterotetramer of two alpha chains (FadB) and two beta chains (FadA).

It is found in the cytoplasm. It carries out the reaction an acyl-CoA + acetyl-CoA = a 3-oxoacyl-CoA + CoA. Its pathway is lipid metabolism; fatty acid beta-oxidation. Its function is as follows. Catalyzes the final step of fatty acid oxidation in which acetyl-CoA is released and the CoA ester of a fatty acid two carbons shorter is formed. In Escherichia coli (strain UTI89 / UPEC), this protein is 3-ketoacyl-CoA thiolase.